Reading from the N-terminus, the 258-residue chain is Coiled-coil domain-containing protein 127 (258 aa).

Positions 50–170 form a coiled coil; it reads KEIEKEKEAC…EEALAERQSI (121 aa).

The protein is Coiled-coil domain-containing protein 127 (CCDC127) of Sus scrofa (Pig).